The chain runs to 261 residues: V-type proton ATPase subunit D (261 aa).

The residue at position 241 (serine 241) is a Phosphoserine.

This sequence belongs to the V-ATPase D subunit family. V-ATPase is a heteromultimeric enzyme composed of a peripheral catalytic V1 complex (components A to H) attached to an integral membrane V0 proton pore complex (components: a, c, c'', d and e).

It is found in the vacuole membrane. In terms of biological role, subunit of the peripheral V1 complex of vacuolar ATPase. V-ATPase is responsible for acidifying a variety of intracellular compartments in eukaryotic cells, thus providing most of the energy required for transport processes in the vacuolar system. This Arabidopsis thaliana (Mouse-ear cress) protein is V-type proton ATPase subunit D (VHA-D).